The sequence spans 675 residues: Methionine--tRNA ligase (675 aa).

Residues Pro15–His25 carry the 'HIGH' region motif. Residues Cys146, Cys149, Cys159, and Cys162 each coordinate Zn(2+). The short motif at Lys332–Ser336 is the 'KMSKS' region element. Lys335 contacts ATP. Residues Asp573–Lys675 enclose the tRNA-binding domain.

The protein belongs to the class-I aminoacyl-tRNA synthetase family. MetG type 1 subfamily. In terms of assembly, homodimer. Zn(2+) is required as a cofactor.

The protein resides in the cytoplasm. It carries out the reaction tRNA(Met) + L-methionine + ATP = L-methionyl-tRNA(Met) + AMP + diphosphate. In terms of biological role, is required not only for elongation of protein synthesis but also for the initiation of all mRNA translation through initiator tRNA(fMet) aminoacylation. The polypeptide is Methionine--tRNA ligase (Yersinia pseudotuberculosis serotype O:3 (strain YPIII)).